Here is a 629-residue protein sequence, read N- to C-terminus: Probable potassium transport system protein Kup 3 (629 aa).

The next 12 membrane-spanning stretches (helical) occupy residues 20–40, 54–74, 106–126, 143–163, 171–191, 212–232, 253–273, 291–311, 343–363, 372–392, 400–420, and 425–445; these read LSLS…LYTF, VTTI…IASV, PFII…GTIT, PSLK…LFAI, IGKA…ILGA, FLFS…LCAT, WFGL…ALVL, FLLP…QAII, IYIG…IIGF, AYGI…FIAL, IITS…FFAA, and FING…MMYI.

Belongs to the HAK/KUP transporter (TC 2.A.72) family.

It localises to the cell inner membrane. The catalysed reaction is K(+)(in) + H(+)(in) = K(+)(out) + H(+)(out). In terms of biological role, transport of potassium into the cell. Likely operates as a K(+):H(+) symporter. This is Probable potassium transport system protein Kup 3 from Legionella pneumophila (strain Paris).